Consider the following 274-residue polypeptide: 2,3,4,5-tetrahydropyridine-2,6-dicarboxylate N-succinyltransferase (274 aa).

Residues R103 and D140 each coordinate substrate.

The protein belongs to the transferase hexapeptide repeat family. In terms of assembly, homotrimer.

It is found in the cytoplasm. It catalyses the reaction (S)-2,3,4,5-tetrahydrodipicolinate + succinyl-CoA + H2O = (S)-2-succinylamino-6-oxoheptanedioate + CoA. It functions in the pathway amino-acid biosynthesis; L-lysine biosynthesis via DAP pathway; LL-2,6-diaminopimelate from (S)-tetrahydrodipicolinate (succinylase route): step 1/3. This chain is 2,3,4,5-tetrahydropyridine-2,6-dicarboxylate N-succinyltransferase, found in Haemophilus ducreyi (strain 35000HP / ATCC 700724).